Here is a 233-residue protein sequence, read N- to C-terminus: uncharacterized protein (233 aa).

It belongs to the methyltransferase superfamily.

This is an uncharacterized protein from Bacillus subtilis (strain 168).